Reading from the N-terminus, the 761-residue chain is Ribonucleoside-diphosphate reductase subunit alpha (761 aa).

The ATP-cone domain maps to 5–95; sequence LFVTKRDGRK…IFHLRKKAYG (91 aa). Residues K9, 15–21, T55, and K91 each bind ATP; that span reads EKINLDK. T209 contributes to the GDP binding site. Cysteines 225 and 462 form a disulfide. Residues 232–234, R262, and R269 contribute to the dTTP site; that span reads DSL. N437 is a binding site for GDP. Residue N437 is the Proton acceptor of the active site. The active-site Cysteine radical intermediate is C439. GDP contacts are provided by residues E441 and 623 to 625; that span reads ETS. Residue E441 is the Proton acceptor of the active site.

Belongs to the ribonucleoside diphosphate reductase large chain family. As to quaternary structure, tetramer of two alpha and two beta subunits.

The catalysed reaction is a 2'-deoxyribonucleoside 5'-diphosphate + [thioredoxin]-disulfide + H2O = a ribonucleoside 5'-diphosphate + [thioredoxin]-dithiol. Its activity is regulated as follows. Under complex allosteric control mediated by deoxynucleoside triphosphates and ATP binding to separate specificity and activation sites on the alpha subunit. The type of nucleotide bound at the specificity site determines substrate preference. It seems probable that ATP makes the enzyme reduce CDP and UDP, dGTP favors ADP reduction and dTTP favors GDP reduction. Stimulated by ATP and inhibited by dATP binding to the activity site. Functionally, provides the precursors necessary for DNA synthesis. Catalyzes the biosynthesis of deoxyribonucleotides from the corresponding ribonucleotides. In Buchnera aphidicola subsp. Acyrthosiphon pisum (strain APS) (Acyrthosiphon pisum symbiotic bacterium), this protein is Ribonucleoside-diphosphate reductase subunit alpha (nrdA).